The following is a 549-amino-acid chain: Small ribosomal subunit protein bS1 (549 aa).

S1 motif domains follow at residues 21–87 (GSIV…LSRE), 105–171 (KATV…VSRR), 192–260 (GSEV…LGLK), 277–347 (NSKL…LGLK), 364–434 (GDKV…LGIK), and 451–512 (GAVV…LSVK).

Belongs to the bacterial ribosomal protein bS1 family.

Binds mRNA; thus facilitating recognition of the initiation point. It is needed to translate mRNA with a short Shine-Dalgarno (SD) purine-rich sequence. This Haemophilus influenzae (strain ATCC 51907 / DSM 11121 / KW20 / Rd) protein is Small ribosomal subunit protein bS1 (rpsA).